We begin with the raw amino-acid sequence, 157 residues long: Iron-sulfur cluster repair protein DnrN (157 aa).

Belongs to the RIC family.

Its subcellular location is the cytoplasm. Its function is as follows. Di-iron-containing protein involved in the repair of iron-sulfur clusters damaged by oxidative and nitrosative stress conditions. Required to repair damage caused by nitric oxide to FNR and NsrR transcription factors. This is Iron-sulfur cluster repair protein DnrN (dnrN) from Neisseria gonorrhoeae.